The chain runs to 141 residues: Translation initiation factor 2 subunit beta (141 aa).

It belongs to the eIF-2-beta/eIF-5 family. As to quaternary structure, heterotrimer composed of an alpha, a beta and a gamma chain.

Its function is as follows. eIF-2 functions in the early steps of protein synthesis by forming a ternary complex with GTP and initiator tRNA. The protein is Translation initiation factor 2 subunit beta of Thermofilum pendens (strain DSM 2475 / Hrk 5).